We begin with the raw amino-acid sequence, 428 residues long: Enolase (428 aa).

Gln-163 serves as a coordination point for (2R)-2-phosphoglycerate. The active-site Proton donor is the Glu-205. The Mg(2+) site is built by Asp-242, Glu-285, and Asp-312. Residues Lys-337, Arg-366, Ser-367, and Lys-388 each coordinate (2R)-2-phosphoglycerate. Lys-337 (proton acceptor) is an active-site residue.

It belongs to the enolase family. Mg(2+) is required as a cofactor.

It localises to the cytoplasm. The protein resides in the secreted. Its subcellular location is the cell surface. The catalysed reaction is (2R)-2-phosphoglycerate = phosphoenolpyruvate + H2O. It functions in the pathway carbohydrate degradation; glycolysis; pyruvate from D-glyceraldehyde 3-phosphate: step 4/5. Functionally, catalyzes the reversible conversion of 2-phosphoglycerate (2-PG) into phosphoenolpyruvate (PEP). It is essential for the degradation of carbohydrates via glycolysis. The sequence is that of Enolase from Neisseria meningitidis serogroup C / serotype 2a (strain ATCC 700532 / DSM 15464 / FAM18).